A 151-amino-acid chain; its full sequence is Transcriptional repressor NrdR (151 aa).

The segment at cysteine 3–cysteine 34 is a zinc-finger region. The 91-residue stretch at isoleucine 49 to threonine 139 folds into the ATP-cone domain.

It belongs to the NrdR family. Zn(2+) is required as a cofactor.

Functionally, negatively regulates transcription of bacterial ribonucleotide reductase nrd genes and operons by binding to NrdR-boxes. This chain is Transcriptional repressor NrdR, found in Acetivibrio thermocellus (strain ATCC 27405 / DSM 1237 / JCM 9322 / NBRC 103400 / NCIMB 10682 / NRRL B-4536 / VPI 7372) (Clostridium thermocellum).